The chain runs to 150 residues: UPF0756 membrane protein A1S_2121 (150 aa).

The next 4 membrane-spanning stretches (helical) occupy residues 22-42 (SQNAAVTIAAGILIVIKITPL), 45-65 (FFPYIQAHGLNLGILILTIGV), 83-103 (FISFKSLVAIAIGLLVAWLGG), and 115-135 (VVAGLLIGTVAGVALLRGVPV).

It belongs to the UPF0756 family.

Its subcellular location is the cell membrane. This chain is UPF0756 membrane protein A1S_2121, found in Acinetobacter baumannii (strain ATCC 17978 / DSM 105126 / CIP 53.77 / LMG 1025 / NCDC KC755 / 5377).